We begin with the raw amino-acid sequence, 265 residues long: Protein synthesis inhibitor PD-S2 (265 aa).

Intrachain disulfides connect cysteine 34–cysteine 262 and cysteine 88–cysteine 110. Asparagine 120 carries N-linked (GlcNAc...) asparagine glycosylation.

Belongs to the ribosome-inactivating protein family. Type 1 RIP subfamily. Post-translationally, glycosylated. Seeds.

The enzyme catalyses Endohydrolysis of the N-glycosidic bond at one specific adenosine on the 28S rRNA.. In terms of biological role, inhibits protein synthesis in animal cells. Useful as immunotoxin for pharmacological applications. In Phytolacca dioica (Bella sombra tree), this protein is Protein synthesis inhibitor PD-S2.